Consider the following 333-residue polypeptide: Protein FLAP1 homolog A (333 aa).

The chain crosses the membrane as a helical span at residues 26–46 (VVIIFVLAFTLVFTPTFEAEA). The tract at residues 53–74 (IGGGSFRAPSAPSRSYSGPSGG) is disordered. Residues 58–70 (FRAPSAPSRSYSG) show a composition bias toward low complexity. Helical transmembrane passes span 92-112 (IIPF…LVMI) and 261-281 (GEYI…LPAV).

It belongs to the FLAP family.

The protein resides in the cellular thylakoid membrane. It localises to the cell inner membrane. Essential for photosynthetic growth under fluctuating light by modulating PxcA- and PxcL-dependent intracellular pH regulation via proton transport (e.g. transient pH reduction upon transition from dark to light followed by an increase in the light until light-to-dark shift). This chain is Protein FLAP1 homolog A, found in Synechocystis sp. (strain ATCC 27184 / PCC 6803 / Kazusa).